Reading from the N-terminus, the 461-residue chain is Asparagine--tRNA ligase (461 aa).

It belongs to the class-II aminoacyl-tRNA synthetase family. In terms of assembly, homodimer.

The protein localises to the cytoplasm. It catalyses the reaction tRNA(Asn) + L-asparagine + ATP = L-asparaginyl-tRNA(Asn) + AMP + diphosphate + H(+). This is Asparagine--tRNA ligase from Geobacter sulfurreducens (strain ATCC 51573 / DSM 12127 / PCA).